Here is a 723-residue protein sequence, read N- to C-terminus: Calpastatin (723 aa).

Disordered regions lie at residues 1–402 and 422–509; these read MNPT…PGRC and STHS…LPPL. Over residues 21-30 the composition is skewed to basic residues; that stretch reads PNKKRHKKQA. Lys-32 is covalently cross-linked (Glycyl lysine isopeptide (Lys-Gly) (interchain with G-Cter in SUMO2)). The span at 46 to 84 shows a compositional bias: basic and acidic residues; the sequence is VVHEKKTQEVKPKEHTEPKSQPKHPSDTRSKHAPKEKAV. N6-acetyllysine is present on Lys-50. 2 stretches are compositionally biased toward low complexity: residues 85–94 and 113–125; these read SKSSEQPPSE and SAVPAVAAAASAE. A Phosphoserine modification is found at Ser-87. A Phosphothreonine modification is found at Thr-137. Over residues 157-173 the composition is skewed to acidic residues; sequence TALDDLIDTLGEPEETK. Residues 171–224 form an Inhibitory domain 1 repeat; sequence ETKEDTTTYTGPEVSDPMSSTYIEELGKREVTLPPKYRELLNKEEGIAGPPPDS. The span at 195–216 shows a compositional bias: basic and acidic residues; sequence ELGKREVTLPPKYRELLNKEEG. A phosphoserine mark is found at Ser-224 and Ser-245. Composition is skewed to basic and acidic residues over residues 249-263 and 306-367; these read DAKKTEKEKSTEEAL and PRPE…KPLS. One copy of the Inhibitory domain 2 repeat lies at 307–359; it reads RPELDPSSIKEVDEAKAKEEKVKKCGEDEERVPSEYRLKPATDKDGKPLLPEA. 3 positions are modified to phosphoserine: Ser-367, Ser-369, and Ser-376. The segment covering 378 to 396 has biased composition (basic and acidic residues); that stretch reads DFDRSKCKEKQSKPTEKNR. Residue Ser-443 is modified to Phosphoserine. The segment covering 445 to 504 has biased composition (basic and acidic residues); sequence GKKEADPEDGKPVEDKVKEKAKEEDREKLGEREETIPPDYRLEEAKDKDGKPLPPKEVKE. One copy of the Inhibitory domain 3 repeat lies at 449 to 502; sequence ADPEDGKPVEDKVKEKAKEEDREKLGEREETIPPDYRLEEAKDKDGKPLPPKEV. Residues Ser-519 and Ser-530 each carry the phosphoserine modification. The interval 547–723 is disordered; sequence SQTPAPTTQA…KPKADGKSTS (177 aa). Positions 548–560 are enriched in low complexity; the sequence is QTPAPTTQAAGPP. Over residues 562-571 the composition is skewed to basic and acidic residues; it reads DSARDNKELD. Phosphoserine occurs at positions 578 and 580. The stretch at 586–642 is one Inhibitory domain 4 repeat; it reads PDPDEHKPVEDKVKEKAKAEHRDKLGERDDTIPPKYQHLLDDNKEGTPGKPKRSESP. Basic and acidic residues predominate over residues 586–643; sequence PDPDEHKPVEDKVKEKAKAEHRDKLGERDDTIPPKYQHLLDDNKEGTPGKPKRSESPR. Positions 653–670 are enriched in polar residues; that stretch reads NLQVPRTPLTPSQGTWTA. Residues 672 to 690 are compositionally biased toward low complexity; the sequence is PQLQKPQQTQQRTKTRSLL. Residues 701–723 are compositionally biased toward basic and acidic residues; it reads KAKDSTKAKEETSKPKADGKSTS.

Belongs to the protease inhibitor I27 (calpastatin) family.

Functionally, specific inhibition of calpain (calcium-dependent cysteine protease). Plays a key role in postmortem tenderization of meat and have been proposed to be involved in muscle protein degradation in living tissue. The polypeptide is Calpastatin (CAST) (Ovis aries (Sheep)).